The sequence spans 122 residues: uncharacterized protein (122 aa).

Disordered stretches follow at residues 1–30 (MGREMKKTGTPRPFRIEDPNQQPTWHDQPE) and 96–122 (FKSCLPPHFTEPSVSLSTSEGCEDAMG).

This is an uncharacterized protein from Homo sapiens (Human).